A 183-amino-acid chain; its full sequence is UPF0397 protein EF_2154 (183 aa).

A run of 5 helical transmembrane segments spans residues 10–30 (IVAIGIGSAVFVILGRFVVIP), 44–64 (FLALMSVVFGPVAGGLIGLIG), 74–94 (GSAWWSWIICSGIIGIIFGFA), 115–135 (IFQAFGNIVVWGLIAPSLDIL), and 147–167 (QGVFATVSNIVAVGIIGTLLM).

This sequence belongs to the UPF0397 family.

Its subcellular location is the cell membrane. The protein is UPF0397 protein EF_2154 of Enterococcus faecalis (strain ATCC 700802 / V583).